A 668-amino-acid chain; its full sequence is Transketolase (668 aa).

Position 28 (His-28) interacts with substrate. Residues His-68 and 116–118 (GPL) contribute to the thiamine diphosphate site. Asp-157 provides a ligand contact to Mg(2+). Gly-158 and Asn-187 together coordinate thiamine diphosphate. Residues Asn-187 and Ile-189 each contribute to the Mg(2+) site. His-263, Arg-358, and Ser-385 together coordinate substrate. His-263 serves as a coordination point for thiamine diphosphate. The active-site Proton donor is Glu-412. Phe-438 is a thiamine diphosphate binding site. Substrate contacts are provided by His-462, Asp-470, His-474, and Arg-521.

The protein belongs to the transketolase family. In terms of assembly, homodimer. Requires Mg(2+) as cofactor. It depends on thiamine diphosphate as a cofactor.

It catalyses the reaction D-sedoheptulose 7-phosphate + D-glyceraldehyde 3-phosphate = aldehydo-D-ribose 5-phosphate + D-xylulose 5-phosphate. Catalyzes the transfer of a two-carbon ketol group from a ketose donor to an aldose acceptor, likely via a covalent intermediate with the cofactor thiamine pyrophosphate. Can use L-erythrulose as donor and D-ribose-5-phosphate as acceptor substrates, forming glycolaldehyde and D-sedoheptulose-7-phosphate. For synthetic purposes, is able to use hydroxypyruvate (HPA) as donor substrate, making the reaction irreversible due to the release of carbon dioxide, and various aldehydes as acceptor substrates, which leads to the corresponding ketoses. Thus, using hydroxypyruvate as donor and three different aldehydes as acceptors, i.e. glycolaldehyde, D-glyceraldehyde and butyraldehyde, the enzyme stereoselectively forms the corresponding products L-erythrulose, D-xylulose and (3S)-1,3-dihydroxyhexan-2-one, respectively. The protein is Transketolase of Geobacillus stearothermophilus (Bacillus stearothermophilus).